We begin with the raw amino-acid sequence, 471 residues long: Abscisic acid 8'-hydroxylase 1 (471 aa).

The chain crosses the membrane as a helical span at residues 1–21 (MGAFLLFVCVLAPFLLVCAVR). Cys-415 contacts heme.

It belongs to the cytochrome P450 family. Heme is required as a cofactor. In terms of tissue distribution, in seedlings and expanding leaves.

Its subcellular location is the membrane. It catalyses the reaction 2-cis-(+)-abscisate + reduced [NADPH--hemoprotein reductase] + O2 = (+)-8'-hydroxyabscisate + oxidized [NADPH--hemoprotein reductase] + H2O + H(+). The protein operates within plant hormone degradation; abscisic acid degradation. Its function is as follows. Involved in the oxidative degradation of abscisic acid. This Oryza sativa subsp. indica (Rice) protein is Abscisic acid 8'-hydroxylase 1 (CYP707A5).